Reading from the N-terminus, the 172-residue chain is Adenine phosphoribosyltransferase (172 aa).

This sequence belongs to the purine/pyrimidine phosphoribosyltransferase family. As to quaternary structure, homodimer.

It is found in the cytoplasm. The catalysed reaction is AMP + diphosphate = 5-phospho-alpha-D-ribose 1-diphosphate + adenine. Its pathway is purine metabolism; AMP biosynthesis via salvage pathway; AMP from adenine: step 1/1. Catalyzes a salvage reaction resulting in the formation of AMP, that is energically less costly than de novo synthesis. This chain is Adenine phosphoribosyltransferase, found in Latilactobacillus sakei subsp. sakei (strain 23K) (Lactobacillus sakei subsp. sakei).